Consider the following 306-residue polypeptide: Aspartate carbamoyltransferase catalytic subunit (306 aa).

Arginine 55 and threonine 56 together coordinate carbamoyl phosphate. Residue lysine 84 participates in L-aspartate binding. Carbamoyl phosphate-binding residues include arginine 105, histidine 133, and glutamine 136. Arginine 166 and arginine 227 together coordinate L-aspartate. Carbamoyl phosphate-binding residues include leucine 265 and proline 266.

It belongs to the aspartate/ornithine carbamoyltransferase superfamily. ATCase family. In terms of assembly, heterododecamer (2C3:3R2) of six catalytic PyrB chains organized as two trimers (C3), and six regulatory PyrI chains organized as three dimers (R2).

It carries out the reaction carbamoyl phosphate + L-aspartate = N-carbamoyl-L-aspartate + phosphate + H(+). Its pathway is pyrimidine metabolism; UMP biosynthesis via de novo pathway; (S)-dihydroorotate from bicarbonate: step 2/3. Functionally, catalyzes the condensation of carbamoyl phosphate and aspartate to form carbamoyl aspartate and inorganic phosphate, the committed step in the de novo pyrimidine nucleotide biosynthesis pathway. This is Aspartate carbamoyltransferase catalytic subunit from Neisseria gonorrhoeae (strain ATCC 700825 / FA 1090).